Reading from the N-terminus, the 367-residue chain is tRNA-specific 2-thiouridylase MnmA (367 aa).

ATP contacts are provided by residues 10-17 (AMSGGVDS) and Met36. Catalysis depends on Cys106, which acts as the Nucleophile. A disulfide bridge links Cys106 with Cys204. Position 130 (Gly130) interacts with ATP. An interaction with tRNA region spans residues 154-156 (KDQ). Cys204 (cysteine persulfide intermediate) is an active-site residue. The interaction with tRNA stretch occupies residues 310-311 (RY).

This sequence belongs to the MnmA/TRMU family.

The protein resides in the cytoplasm. It carries out the reaction S-sulfanyl-L-cysteinyl-[protein] + uridine(34) in tRNA + AH2 + ATP = 2-thiouridine(34) in tRNA + L-cysteinyl-[protein] + A + AMP + diphosphate + H(+). In terms of biological role, catalyzes the 2-thiolation of uridine at the wobble position (U34) of tRNA, leading to the formation of s(2)U34. The sequence is that of tRNA-specific 2-thiouridylase MnmA from Desulforamulus reducens (strain ATCC BAA-1160 / DSM 100696 / MI-1) (Desulfotomaculum reducens).